Consider the following 122-residue polypeptide: UPF0102 protein xcc-b100_3645 (122 aa).

This sequence belongs to the UPF0102 family.

The sequence is that of UPF0102 protein xcc-b100_3645 from Xanthomonas campestris pv. campestris (strain B100).